Here is a 983-residue protein sequence, read N- to C-terminus: Probable beta-galactosidase C (983 aa).

A signal peptide spans 1–23 (MRIFSFLFLLLLGILTGQGLVSG). Substrate is bound by residues Tyr-82, Asn-127, Ala-128, Glu-129, and Asn-187. Glu-188 (proton donor) is an active-site residue. Asn-197 carries N-linked (GlcNAc...) asparagine glycosylation. Residue Tyr-251 coordinates substrate. An intrachain disulfide couples Cys-257 to Cys-304. Asn-276 is a glycosylation site (N-linked (GlcNAc...) asparagine). Glu-287 acts as the Nucleophile in catalysis. Tyr-353 is a binding site for substrate. Asn-391, Asn-434, Asn-466, Asn-516, Asn-601, Asn-676, Asn-714, Asn-719, Asn-758, and Asn-804 each carry an N-linked (GlcNAc...) asparagine glycan.

Belongs to the glycosyl hydrolase 35 family.

The protein localises to the secreted. The enzyme catalyses Hydrolysis of terminal non-reducing beta-D-galactose residues in beta-D-galactosides.. In terms of biological role, cleaves beta-linked terminal galactosyl residues from gangliosides, glycoproteins, and glycosaminoglycans. The protein is Probable beta-galactosidase C (lacC) of Aspergillus fumigatus (strain CBS 144.89 / FGSC A1163 / CEA10) (Neosartorya fumigata).